A 180-amino-acid chain; its full sequence is NAD(P)H-quinone oxidoreductase subunit 6, chloroplastic (180 aa).

5 consecutive transmembrane segments (helical) span residues 10–30, 32–52, 57–77, 102–122, and 153–173; these read LLLAPLTLSLIFGGIGVVLLT, IIYSALSLGLVLICISFFYII, FVAVAQILIYIGAVNILILFA, IVCTSLFCSLITIILNISWFG, and FLPFELISIILLVALIGAITI.

It belongs to the complex I subunit 6 family. NDH is composed of at least 16 different subunits, 5 of which are encoded in the nucleus.

Its subcellular location is the plastid. The protein resides in the chloroplast thylakoid membrane. It catalyses the reaction a plastoquinone + NADH + (n+1) H(+)(in) = a plastoquinol + NAD(+) + n H(+)(out). It carries out the reaction a plastoquinone + NADPH + (n+1) H(+)(in) = a plastoquinol + NADP(+) + n H(+)(out). Functionally, NDH shuttles electrons from NAD(P)H:plastoquinone, via FMN and iron-sulfur (Fe-S) centers, to quinones in the photosynthetic chain and possibly in a chloroplast respiratory chain. The immediate electron acceptor for the enzyme in this species is believed to be plastoquinone. Couples the redox reaction to proton translocation, and thus conserves the redox energy in a proton gradient. This is NAD(P)H-quinone oxidoreductase subunit 6, chloroplastic (ndhG) from Cryptomeria japonica (Japanese cedar).